The sequence spans 95 residues: UPF0358 protein BCE_3996 (95 aa).

Belongs to the UPF0358 family.

The polypeptide is UPF0358 protein BCE_3996 (Bacillus cereus (strain ATCC 10987 / NRS 248)).